Here is a 1056-residue protein sequence, read N- to C-terminus: Multidrug resistance protein MdtB (1056 aa).

12 helical membrane passes run 16-36 (FILR…AGII), 342-362 (DVQF…YVFL), 373-393 (IAVP…GFSV), 396-416 (LTLM…IVVI), 440-460 (IGFT…PLLF), 472-492 (FAIT…TLTP), 537-557 (WITL…YLTI), 869-889 (LILA…ESFI), 890-910 (HPVT…LALM), 911-931 (VGGY…IGIV), 968-988 (ILMT…STGI), and 1002-1022 (GGLI…YLLF). The tract at residues 1037–1056 (LQSQNQRELDHSPVNHQEPL) is disordered. Basic and acidic residues predominate over residues 1043–1056 (RELDHSPVNHQEPL).

This sequence belongs to the resistance-nodulation-cell division (RND) (TC 2.A.6) family. MdtB subfamily. In terms of assembly, part of a tripartite efflux system composed of MdtA, MdtB and MdtC. MdtB forms a heteromultimer with MdtC.

The protein localises to the cell inner membrane. This chain is Multidrug resistance protein MdtB, found in Xenorhabdus bovienii (strain SS-2004) (Xenorhabdus nematophila subsp. bovienii).